Reading from the N-terminus, the 447-residue chain is Hemopexin (447 aa).

Positions 1-18 are cleaved as a signal peptide; sequence MRLIQALSLCLALSLSLA. The segment at 20–44 is disordered; that stretch reads PPQHKEDHSHKGKPGGEGHKHELHH. Residues 22 to 44 are compositionally biased toward basic and acidic residues; the sequence is QHKEDHSHKGKPGGEGHKHELHH. Hemopexin repeat units lie at residues 53 to 93, 99 to 151, 152 to 197, 198 to 243, 262 to 304, 305 to 351, 352 to 395, and 396 to 441; these read GIEF…FPEL, LGHV…FPGI, PDHL…FKSM, PNCT…FMRC, RVHL…FKEL, HSEV…VLGI, EGPV…TITQ, and FKRI…VSQQ. A glycan (N-linked (GlcNAc...) asparagine) is linked at asparagine 87. Residues asparagine 168 and asparagine 199 are each glycosylated (N-linked (GlcNAc...) asparagine). Histidine 293 serves as a coordination point for heme.

This sequence belongs to the hemopexin family.

Its subcellular location is the secreted. Its function is as follows. Binds heme and transports it to the liver for breakdown and iron recovery, after which the free hemopexin returns to the circulation. The chain is Hemopexin from Danio rerio (Zebrafish).